The sequence spans 520 residues: GMP synthase [glutamine-hydrolyzing] (520 aa).

Positions lysine 9 to glutamine 202 constitute a Glutamine amidotransferase type-1 domain. Residue cysteine 86 is the Nucleophile of the active site. Active-site residues include histidine 176 and glutamate 178. Positions tryptophan 203–arginine 395 constitute a GMPS ATP-PPase domain. Serine 230 to serine 236 is an ATP binding site.

As to quaternary structure, homodimer.

It carries out the reaction XMP + L-glutamine + ATP + H2O = GMP + L-glutamate + AMP + diphosphate + 2 H(+). The protein operates within purine metabolism; GMP biosynthesis; GMP from XMP (L-Gln route): step 1/1. Functionally, catalyzes the synthesis of GMP from XMP. In Geobacter metallireducens (strain ATCC 53774 / DSM 7210 / GS-15), this protein is GMP synthase [glutamine-hydrolyzing].